The sequence spans 1356 residues: Serine/threonine-protein kinase PSK1 (1356 aa).

Residue serine 10 is modified to Phosphoserine. The interval 20 to 115 is disordered; the sequence is KHAITHKGTS…SVDSTVSSPL (96 aa). Composition is skewed to polar residues over residues 26 to 37 and 54 to 64; these read KGTSSSVASLQT and YDTSLSDVSTP. Over residues 99 to 115 the composition is skewed to low complexity; it reads LPSTASSSVDSTVSSPL. Phosphoserine occurs at positions 192, 202, 255, 286, and 327. A PAS 1 domain is found at 450–518; that stretch reads RTFTSTKNSA…VLHKLLSTEG (69 aa). Over residues 592–608 the composition is skewed to low complexity; the sequence is PTLSSSSTLSLPKMASS. Disordered stretches follow at residues 592-612 and 627-660; these read PTLSSSSTLSLPKMASSPTGS and YTKPTSTENRNGDENQLDGDSHSEPSLSSSPVRS. The 70-residue stretch at 738 to 807 folds into the PAS 2 domain; it reads LKLKIHSLPY…FINDKYPALD (70 aa). Serine 926 carries the post-translational modification Phosphoserine. The disordered stretch occupies residues 948–972; that stretch reads DSRAHSQSTLSEQEQVPLENDKDSG. The segment covering 952 to 961 has biased composition (polar residues); sequence HSQSTLSEQE. Phosphoserine is present on residues serine 1018, serine 1023, serine 1035, and serine 1055. The span at 1021–1032 shows a compositional bias: polar residues; sequence TESLADSKSSGK. The segment at 1021-1066 is disordered; the sequence is TESLADSKSSGKGLSPLEEEKLIDENATENGLAGSPKDEDGIIMTN. Residue threonine 1079 is modified to Phosphothreonine. Residues 1096–1354 enclose the Protein kinase domain; the sequence is FVSLQKMGEG…IDDINNDKWL (259 aa). ATP-binding positions include 1102–1110 and lysine 1125; that span reads MGEGAYGKV. Aspartate 1230 (proton acceptor) is an active-site residue.

Belongs to the protein kinase superfamily. Ser/Thr protein kinase family.

It localises to the cytoplasm. It catalyses the reaction L-seryl-[protein] + ATP = O-phospho-L-seryl-[protein] + ADP + H(+). It carries out the reaction L-threonyl-[protein] + ATP = O-phospho-L-threonyl-[protein] + ADP + H(+). Its function is as follows. Serine/threonine-protein kinase involved in the control of sugar metabolism and translation. Phosphorylates UGP1, which is required for normal glycogen and beta-(1,6)-glucan synthesis. This phosphorylation shifts glucose partitioning toward cell wall glucan synthesis at the expense of glycogen synthesis. This Saccharomyces cerevisiae (strain ATCC 204508 / S288c) (Baker's yeast) protein is Serine/threonine-protein kinase PSK1 (PSK1).